Here is a 425-residue protein sequence, read N- to C-terminus: Serine--tRNA ligase (425 aa).

233–235 (TAE) provides a ligand contact to L-serine. 264–266 (RRE) provides a ligand contact to ATP. Glutamate 287 is an L-serine binding site. 351–354 (EISS) is an ATP binding site. Serine 385 is an L-serine binding site.

It belongs to the class-II aminoacyl-tRNA synthetase family. Type-1 seryl-tRNA synthetase subfamily. In terms of assembly, homodimer. The tRNA molecule binds across the dimer.

It localises to the cytoplasm. It catalyses the reaction tRNA(Ser) + L-serine + ATP = L-seryl-tRNA(Ser) + AMP + diphosphate + H(+). It carries out the reaction tRNA(Sec) + L-serine + ATP = L-seryl-tRNA(Sec) + AMP + diphosphate + H(+). The protein operates within aminoacyl-tRNA biosynthesis; selenocysteinyl-tRNA(Sec) biosynthesis; L-seryl-tRNA(Sec) from L-serine and tRNA(Sec): step 1/1. In terms of biological role, catalyzes the attachment of serine to tRNA(Ser). Is also able to aminoacylate tRNA(Sec) with serine, to form the misacylated tRNA L-seryl-tRNA(Sec), which will be further converted into selenocysteinyl-tRNA(Sec). The sequence is that of Serine--tRNA ligase from Synechococcus sp. (strain CC9605).